We begin with the raw amino-acid sequence, 142 residues long: DNA-directed RNA polymerase subunit omega (142 aa).

Residues 93–142 form a disordered region; the sequence is AWSVPEAGGDEGGDASELLDDEGEGAAAGAEPDFSEMDVPLADLADEDKI. Residues 100–116 show a composition bias toward acidic residues; that stretch reads GGDEGGDASELLDDEGE.

It belongs to the RNA polymerase subunit omega family. The RNAP catalytic core consists of 2 alpha, 1 beta, 1 beta' and 1 omega subunit. When a sigma factor is associated with the core the holoenzyme is formed, which can initiate transcription.

The enzyme catalyses RNA(n) + a ribonucleoside 5'-triphosphate = RNA(n+1) + diphosphate. Its function is as follows. Promotes RNA polymerase assembly. Latches the N- and C-terminal regions of the beta' subunit thereby facilitating its interaction with the beta and alpha subunits. The chain is DNA-directed RNA polymerase subunit omega from Rhodospirillum centenum (strain ATCC 51521 / SW).